The sequence spans 356 residues: Decorin (356 aa).

Positions 1-15 (MRLVLFILLLPVCLA) are cleaved as a signal peptide. Residues 16–29 (TPFHQKGLFDFMLE) constitute a propeptide that is removed on maturation. The O-linked (Xyl...) (glycosaminoglycan) serine glycan is linked to serine 45. 2 cysteine pairs are disulfide-bonded: cysteine 51–cysteine 57 and cysteine 55–cysteine 64. LRR repeat units follow at residues 70–90 (ERVP…NNKI), 91–114 (TEIR…NNKI), 115–138 (SKIS…KNNL), 139–159 (KELP…ENEI), 160–183 (SKLR…TNPL), 184–209 (KSSG…DTNI), 210–230 (TSIP…GNKI), 231–254 (SKID…FNSI), 255–278 (SSVE…NNEL), 279–301 (VRVP…NNKI), 302–331 (ASIG…SNPV), and 332–356 (QYWE…GNYK). A glycan (N-linked (GlcNAc...) asparagine) is linked at asparagine 208. N-linked (GlcNAc...) asparagine glycosylation occurs at asparagine 259. The cysteines at positions 310 and 343 are disulfide-linked.

It belongs to the small leucine-rich proteoglycan (SLRP) family. SLRP class I subfamily. Binds to type I and type II collagen, to fibronectin and TGF-beta. Forms a ternary complex with MFAP2 and ELN. Post-translationally, the attached glycosaminoglycan chain can be either chondroitin sulfate or dermatan sulfate depending upon the tissue of origin.

Its subcellular location is the secreted. It is found in the extracellular space. It localises to the extracellular matrix. May affect the rate of fibrils formation. This chain is Decorin (DCN), found in Coturnix japonica (Japanese quail).